The sequence spans 113 residues: Dynein light chain Tctex-type 1 (113 aa).

Met-1 is subject to N-acetylmethionine. Positions 41–113 (QWTTNVVEQT…CIVSAFGLSI (73 aa)) are interaction with GNB1.

The protein belongs to the dynein light chain Tctex-type family. In terms of assembly, homodimer. The cytoplasmic dynein 1 complex consists of two catalytic heavy chains (HCs) and a number of non-catalytic subunits presented by intermediate chains (ICs), light intermediate chains (LICs) and light chains (LCs); the composition seems to vary in respect to the IC, LIC and LC composition. The heavy chain homodimer serves as a scaffold for the probable homodimeric assembly of the non-catalytic subunits. The ICs and LICs bind directly to the HC dimer and the LCs assemble on the IC dimer. DYNLT1 and DYNLT3 compete for association with dynein IC (DYNC1I1 or DYNC1I2). Self-associates. Interacts with RHO. Interacts with DYNC1I1 and DYNC1I2. Interacts with DOC2A, DOC2B and SCN10A. Interacts with PVR. Interacts with SVIL isoform 2. Interacts with GNB1; the interaction occurs in presence of guanine nucleotide-binding protein G(T) subunit gamma; the interaction diminishes the association of DYNLT1 with dynein IC (DYNC1I1 or DYNC1I2). Interacts with GNB2, GNB3 and GNB5; the interactions occur in presence of guanine nucleotide-binding protein G(T) subunit gamma. Interacts with ACVR2B and ARHGEF2. Interacts with DNAI4. Interacts with CFAP61. In terms of processing, phosphorylated by BMPR2. The phosphorylation status is proposed to regulate the association with the cytoplasmic dynein complex and may have role in cytoplasmic dynein cargo release.

The protein localises to the golgi apparatus. It localises to the cytoplasm. The protein resides in the cytoskeleton. It is found in the spindle. In terms of biological role, acts as one of several non-catalytic accessory components of the cytoplasmic dynein 1 complex that are thought to be involved in linking dynein to cargos and to adapter proteins that regulate dynein function. Cytoplasmic dynein 1 acts as a motor for the intracellular retrograde motility of vesicles and organelles along microtubules. Binds to transport cargos and is involved in apical cargo transport such as rhodopsin-bearing vesicles in polarized epithelia. May also be a accessory component of axonemal dynein. Its function is as follows. Plays a role in neuronal morphogenesis; the function is independent of cytoplasmic dynein and seems to be coupled to regulation of the actin cytoskeleton by enhancing Rac1 activity. The function in neurogenesis may be regulated by association with a G-protein beta-gamma dimer. May function as a receptor-independent activator of heterotrimeric G-protein signaling; the activation appears to be independent of a nucleotide exchange. Plays a role in regulating neurogenesis; inhibits the genesis of neurons from precursor cells during cortical development presumably by antagonizing ARHGEF2. Involved in the regulation of mitotic spindle orientation. Unrelated to the role in retrograde microtubule-associated movement may play a role in the dimerization of cytoplasmic proteins/domains such as for ACVR2B. Binds to the cytoplasmic domain of ACVR2B and, in vitro, inhibits ACVR2B signaling. The protein is Dynein light chain Tctex-type 1 (DYNLT1) of Bos taurus (Bovine).